We begin with the raw amino-acid sequence, 307 residues long: Dioxygenase cdmD (307 aa).

Fe cation contacts are provided by histidine 146, aspartate 148, and histidine 226.

This sequence belongs to the PhyH family. In terms of assembly, homodimer. Fe cation is required as a cofactor.

The enzyme catalyses verruculide A + 2-oxoglutarate + O2 = chrodrimanin T + succinate + CO2. It carries out the reaction chrodrimanin E + 2-oxoglutarate + O2 = chrodrimanin A + succinate + CO2. The protein operates within secondary metabolite biosynthesis; terpenoid biosynthesis. In terms of biological role, dioxygenase; part of the gene cluster that mediates the biosynthesis of chrodrimanin B, a meroterpenoid that acts as a potent blocker of insect GABA-gated chloride channels. The first step of the pathway is the biosynthesis of 6-hydroxymellein by the polyketide synthase cdmE. The prenyltransferase cdmH acts as a 6-hydroxymellein 5-farnesyltransferase and produces the hydrophobic metabolite verruculide C. The FAD-dependent monooxygenase cdmI further converts verruculide C into verruculide B. The terpene cyclase cdmG then produced the pentacyclic molecule 3-hydroxypentacecilide A, the backbone structure of chrodrimanin B, via folding the farnesyl moiety of the substrate into the chair-boat conformation. The short-chain dehydrogenase/reductase cdmF functions as the 3-OH dehydrogenase that oxidizes the C-3 hydroxyl group of 3-hydroxypentacecilide A and produces chrodrimanin C, the dehydrogenated product of 3-hydroxypentacecilide A. The cytochrome P450 monooxygenase cdmJ then accepts both 3-hydroxypentacecilide A and chrodrimanin C and functions as a C-7-beta-hydroxylase to produce respectively chrodrimanin H and chrodrimanin F. The dioxygenase cdmA accepts chrodrimanin H to afford chrodrimanin E, which is further transformed to chrodrimanin A by the dioxygenase cdmD. CdmA can also accept chrodrimanin C as substrate to convert it into verruculide A, which is further converted into chrodrimanin T by cdmD. The last step of the biosynthesis is proposed to be performed by the acetyltransferase cdmC which acetylates chrodrimanin A to yield chrodrimanin B. The pathway may also lead to the production of additional shunt products, including chrodrimanins T and U. The polypeptide is Dioxygenase cdmD (Talaromyces verruculosus (Penicillium verruculosum)).